Consider the following 442-residue polypeptide: Trigger factor (442 aa).

The PPIase FKBP-type domain maps to 163-248; the sequence is GDQVVIDFLG…IKEVKAPKAA (86 aa).

The protein belongs to the FKBP-type PPIase family. Tig subfamily.

Its subcellular location is the cytoplasm. The enzyme catalyses [protein]-peptidylproline (omega=180) = [protein]-peptidylproline (omega=0). Functionally, involved in protein export. Acts as a chaperone by maintaining the newly synthesized protein in an open conformation. Functions as a peptidyl-prolyl cis-trans isomerase. This is Trigger factor from Dinoroseobacter shibae (strain DSM 16493 / NCIMB 14021 / DFL 12).